A 321-amino-acid polypeptide reads, in one-letter code: MEKNRKKQIVVLSIALVCIFILVFSLFHKSATKDSANPPLTNVLTDSISQIVSACPGEIGVAVIVNNRDTVKVNNKSVYPMMSVFKVHQALALCNDFDNKGISLDTLVNINRDKLDPKTWSPMLKDYSGPVISLTVRDLLRYTLTQSDNNASNLMFKDMVNVAQTDSFIATLIPRSSFQIAYTEEEMSADHNKAYSNYTSPLGAAMLMNRLFTEGLIDDEKQSFIKNTLKECKTGVDRIAAPLLDKEGVVIAHKTGSGYVNENGVLAAHNDVAYICLPNNISYTLAVFVKDFKGNKSQASQYVAHISAVVYSLLMQTSVKS.

Residues methionine 1–serine 30 form the signal peptide. Catalysis depends on serine 83, which acts as the Acyl-ester intermediate. Lysine 233 to glycine 235 lines the substrate pocket.

It belongs to the class-A beta-lactamase family.

The catalysed reaction is a beta-lactam + H2O = a substituted beta-amino acid. With respect to regulation, inhibited by clavulanic acid. In terms of biological role, can hydrolyze cephalosporins, penicillins and also cefoxitin; but at a slow rate. This is Beta-lactamase (cfxA) from Phocaeicola vulgatus (Bacteroides vulgatus).